The following is a 941-amino-acid chain: Endoplasmic reticulum aminopeptidase 1 (941 aa).

A topological domain (cytoplasmic) is located at residue methionine 1. The helical; Signal-anchor for type II membrane protein transmembrane segment at 2–21 (VFLPLKWSLATMSFLLSSLL) threads the bilayer. Residues 22-941 (ALLTVSTPSW…WLQSEKLERM (920 aa)) lie on the Lumenal side of the membrane. Residues asparagine 70 and asparagine 154 are each glycosylated (N-linked (GlcNAc...) asparagine). Substrate contacts are provided by residues glutamate 183 and 317 to 321 (GAMEN). Histidine 353 lines the Zn(2+) pocket. Glutamate 354 (proton acceptor) is an active-site residue. Zn(2+)-binding residues include histidine 357 and glutamate 376. 2 disulfide bridges follow: cysteine 404-cysteine 443 and cysteine 736-cysteine 743. Asparagine 414 carries N-linked (GlcNAc...) asparagine glycosylation. N-linked (GlcNAc...) asparagine glycosylation is found at asparagine 760 and asparagine 901.

The protein belongs to the peptidase M1 family. In terms of assembly, monomer. May also exist as a heterodimer; with ERAP2. Interacts with RBMX. It depends on Zn(2+) as a cofactor. In terms of processing, N-glycosylated. Ubiquitous.

It is found in the endoplasmic reticulum membrane. Functionally, aminopeptidase that plays a central role in peptide trimming, a step required for the generation of most HLA class I-binding peptides. Peptide trimming is essential to customize longer precursor peptides to fit them to the correct length required for presentation on MHC class I molecules. Strongly prefers substrates 9-16 residues long. Rapidly degrades 13-mer to a 9-mer and then stops. Preferentially hydrolyzes the residue Leu and peptides with a hydrophobic C-terminus, while it has weak activity toward peptides with charged C-terminus. May play a role in the inactivation of peptide hormones. May be involved in the regulation of blood pressure through the inactivation of angiotensin II and/or the generation of bradykinin in the kidney. This is Endoplasmic reticulum aminopeptidase 1 (ERAP1) from Homo sapiens (Human).